A 282-amino-acid chain; its full sequence is Protease HtpX homolog (282 aa).

A run of 2 helical transmembrane segments spans residues 6 to 26 (TFILMTFLALIFMFFGGLIGG) and 28 to 48 (QGVIIAFVVALGMNFFSYFFS). Residue histidine 130 participates in Zn(2+) binding. Glutamate 131 is an active-site residue. Histidine 134 serves as a coordination point for Zn(2+). The next 2 helical transmembrane spans lie at 140 to 160 (ILIGSVAAVFAGAIAILANFA) and 177 to 197 (ILMIVAAIIMPIAAAIIQMAI). Glutamate 202 contacts Zn(2+).

It belongs to the peptidase M48B family. Zn(2+) is required as a cofactor.

Its subcellular location is the cell inner membrane. This Campylobacter hominis (strain ATCC BAA-381 / DSM 21671 / CCUG 45161 / LMG 19568 / NCTC 13146 / CH001A) protein is Protease HtpX homolog.